Consider the following 417-residue polypeptide: Gamma-glutamyl phosphate reductase (417 aa).

Belongs to the gamma-glutamyl phosphate reductase family.

The protein resides in the cytoplasm. It catalyses the reaction L-glutamate 5-semialdehyde + phosphate + NADP(+) = L-glutamyl 5-phosphate + NADPH + H(+). The protein operates within amino-acid biosynthesis; L-proline biosynthesis; L-glutamate 5-semialdehyde from L-glutamate: step 2/2. In terms of biological role, catalyzes the NADPH-dependent reduction of L-glutamate 5-phosphate into L-glutamate 5-semialdehyde and phosphate. The product spontaneously undergoes cyclization to form 1-pyrroline-5-carboxylate. The polypeptide is Gamma-glutamyl phosphate reductase (Cronobacter sakazakii (strain ATCC BAA-894) (Enterobacter sakazakii)).